Reading from the N-terminus, the 441-residue chain is Proline--tRNA ligase (441 aa).

It belongs to the class-II aminoacyl-tRNA synthetase family. ProS type 2 subfamily. As to quaternary structure, homodimer.

The protein localises to the cytoplasm. It carries out the reaction tRNA(Pro) + L-proline + ATP = L-prolyl-tRNA(Pro) + AMP + diphosphate. Its function is as follows. Catalyzes the attachment of proline to tRNA(Pro) in a two-step reaction: proline is first activated by ATP to form Pro-AMP and then transferred to the acceptor end of tRNA(Pro). In Methylorubrum populi (strain ATCC BAA-705 / NCIMB 13946 / BJ001) (Methylobacterium populi), this protein is Proline--tRNA ligase.